We begin with the raw amino-acid sequence, 71 residues long: Prokaryotic ubiquitin-like protein Pup (71 aa).

The segment at 1–30 is disordered; that stretch reads MPSASGHHQIPAETQRHDDDQTQETAQGLS. A coiled-coil region spans residues 23–56; it reads QETAQGLSAAAMLAQEQADDLDAILDDIETVLET. Residues 27 to 65 form an ARC ATPase binding region; the sequence is QGLSAAAMLAQEQADDLDAILDDIETVLETNAEEYVSSF. An Isoglutamyl lysine isopeptide (Glu-Lys) (interchain with K-? in acceptor proteins) cross-link involves residue Glu71.

The protein belongs to the prokaryotic ubiquitin-like protein family. As to quaternary structure, strongly interacts with the proteasome-associated ATPase ARC through a hydrophobic interface; the interacting region of Pup lies in its C-terminal half. There is one Pup binding site per ARC hexamer ring.

It participates in protein degradation; proteasomal Pup-dependent pathway. Protein modifier that is covalently attached to lysine residues of substrate proteins, thereby targeting them for proteasomal degradation. The tagging system is termed pupylation. This chain is Prokaryotic ubiquitin-like protein Pup, found in Bifidobacterium animalis subsp. lactis (strain AD011).